The chain runs to 300 residues: Zinc finger protein 705B (300 aa).

Residues 7-78 (VTFEDVAIDF…GRVFLQDQNP (72 aa)) enclose the KRAB domain. C2H2-type zinc fingers lie at residues 172-194 (YQCN…KMTH), 200-222 (YACH…EKTH), and 228-250 (YKCH…ERTH). A C2H2-type 4; degenerate zinc finger spans residues 256-278 (YECDKSGKAFSQSSGFRGNKIIH).

It belongs to the krueppel C2H2-type zinc-finger protein family.

It is found in the nucleus. May be involved in transcriptional regulation. In Homo sapiens (Human), this protein is Zinc finger protein 705B (ZNF705B).